A 546-amino-acid polypeptide reads, in one-letter code: Glucose-6-phosphate isomerase (546 aa).

Glutamate 352 (proton donor) is an active-site residue. Catalysis depends on residues histidine 383 and lysine 511.

It belongs to the GPI family.

The protein localises to the cytoplasm. It catalyses the reaction alpha-D-glucose 6-phosphate = beta-D-fructose 6-phosphate. It functions in the pathway carbohydrate biosynthesis; gluconeogenesis. The protein operates within carbohydrate degradation; glycolysis; D-glyceraldehyde 3-phosphate and glycerone phosphate from D-glucose: step 2/4. Functionally, catalyzes the reversible isomerization of glucose-6-phosphate to fructose-6-phosphate. The sequence is that of Glucose-6-phosphate isomerase from Paramagnetospirillum magneticum (strain ATCC 700264 / AMB-1) (Magnetospirillum magneticum).